A 525-amino-acid polypeptide reads, in one-letter code: 2,3-bisphosphoglycerate-independent phosphoglycerate mutase (525 aa).

Mn(2+) contacts are provided by aspartate 18 and serine 68. Serine 68 serves as the catalytic Phosphoserine intermediate. Substrate is bound by residues histidine 129, 159–160, arginine 194, arginine 200, 269–272, and lysine 345; these read RD and RADR. Residues aspartate 413, histidine 417, aspartate 454, histidine 455, and histidine 473 each contribute to the Mn(2+) site.

Belongs to the BPG-independent phosphoglycerate mutase family. As to quaternary structure, monomer. The cofactor is Mn(2+).

The enzyme catalyses (2R)-2-phosphoglycerate = (2R)-3-phosphoglycerate. The protein operates within carbohydrate degradation; glycolysis; pyruvate from D-glyceraldehyde 3-phosphate: step 3/5. Functionally, catalyzes the interconversion of 2-phosphoglycerate and 3-phosphoglycerate. The polypeptide is 2,3-bisphosphoglycerate-independent phosphoglycerate mutase (Chromohalobacter salexigens (strain ATCC BAA-138 / DSM 3043 / CIP 106854 / NCIMB 13768 / 1H11)).